A 546-amino-acid chain; its full sequence is Phosphatidylinositol 4-phosphate 5-kinase type-1 alpha (546 aa).

Positions 66-434 constitute a PIPK domain; sequence TSSALKGAIQ…RFQRFMCNTV (369 aa). Residue K88 forms a Glycyl lysine isopeptide (Lys-Gly) (interchain with G-Cter in ubiquitin) linkage. 2 disordered regions span residues 442-475 and 491-518; these read PSPT…SGEH and LGRP…PSFS. Low complexity-rich tracts occupy residues 450 to 462 and 509 to 518; these read SGPS…GPSG and GSPVPGPSFS.

In terms of assembly, interacts with RAC1. Interacts with TUT1. Forms a complex with CDH1/E-cadherin, CTNNB1/beta-catenin and CTNND1 at the plasma membrane upon calcium stimulation. Found in a ternary complex with IRS1 and DGKZ in the absence of insulin stimulation. Interacts with DGKZ. Interacts with PIP4K2C; the interaction inhibits PIP5K1A kinase activity. As to expression, highest expression in brain. Also detected in skeletal muscle, testis, brain and lung.

It is found in the cell membrane. It localises to the cytoplasm. The protein resides in the nucleus. Its subcellular location is the nucleus speckle. The protein localises to the cell projection. It is found in the ruffle. It localises to the lamellipodium. The catalysed reaction is a 1,2-diacyl-sn-glycero-3-phospho-(1D-myo-inositol 4-phosphate) + ATP = a 1,2-diacyl-sn-glycero-3-phospho-(1D-myo-inositol-4,5-bisphosphate) + ADP + H(+). The enzyme catalyses 1-octadecanoyl-2-(5Z,8Z,11Z,14Z)-eicosatetraenoyl-sn-glycero-3-phospho-1D-myo-inositol 4-phosphate + ATP = 1-octadecanoyl-2-(5Z,8Z,11Z,14Z)-eicosatetraenoyl-sn-glycero-3-phospho-1D-myo-inositol 4,5-bisphosphate + ADP + H(+). It catalyses the reaction 1,2-dihexadecanoyl-sn-glycero-3-phospho-(1D-myo-inositol-4-phosphate) + ATP = 1,2-dihexadecanoyl-sn-glycero-3-phospho-(1D-myo-inositol-4,5-bisphosphate) + ADP + H(+). It carries out the reaction 1-octadecanoyl-2-(9Z)-octadecenoyl-sn-glycero-3-phospho-1D-myo-inositol 4-phosphate + ATP = 1-octadecanoyl-2-(9Z)-octadecenoyl-sn-glycero-3-phospho-1D-myo-inositol 4,5-bisphosphate + ADP + H(+). The catalysed reaction is 1-octadecanoyl-2-(9Z)-octadecenoyl-sn-glycero-3-phospho-1D-myo-inositol + ATP = 1-octadecanoyl-2-(9Z)-octadecenoyl-sn-glycero-3-phospho-1D-myo-inositol 5-phosphate + ADP + H(+). The enzyme catalyses 1-octadecanoyl-2-(9Z,12Z)-octadecadienoyl-sn-glycero-3-phospho-1D-myo-inositol + ATP = 1-octadecanoyl-2-(9Z,12Z)-octadecadienoyl-sn-glycero-3-phospho-1D-myo-inositol 5-phosphate + ADP + H(+). It catalyses the reaction 1-octadecanoyl-2-(5Z,8Z,11Z,14Z-eicosatetraenoyl)-sn-glycero-3-phospho-(1D-myo-inositol) + ATP = 1-octadecanoyl-2-(5Z,8Z,11Z,14Z)-eicosatetraenoyl-sn-glycero-3-phospho-1D-myo-inositol 5-phosphate + ADP + H(+). It carries out the reaction 1,2-di-(9Z,12Z)-octadecadienoyl-sn-glycero-3-phospho-1D-myo-inositol + ATP = 1,2-di(9Z,12Z)-octadecadienoyl-sn-glycero-3-phospho-1D-myo-inositol 5-phosphate + ADP + H(+). Activated by phosphatidic acid. Its function is as follows. Catalyzes the phosphorylation of phosphatidylinositol 4-phosphate (PtdIns(4)P/PI4P) to form phosphatidylinositol 4,5-bisphosphate (PtdIns(4,5)P2/PIP2), a lipid second messenger that regulates several cellular processes such as signal transduction, vesicle trafficking, actin cytoskeleton dynamics, cell adhesion, and cell motility. PtdIns(4,5)P2 can directly act as a second messenger or can be utilized as a precursor to generate other second messengers: inositol 1,4,5-trisphosphate (IP3), diacylglycerol (DAG) or phosphatidylinositol-3,4,5-trisphosphate (PtdIns(3,4,5)P3/PIP3). PIP5K1A-mediated phosphorylation of PtdIns(4)P is the predominant pathway for PtdIns(4,5)P2 synthesis. Can also use phosphatidylinositol (PtdIns) as substrate in vitro. Together with PIP5K1C, is required for phagocytosis, both enzymes regulating different types of actin remodeling at sequential steps. Promotes particle ingestion by activating the WAS GTPase-binding protein that induces Arp2/3 dependent actin polymerization at the nascent phagocytic cup. Together with PIP5K1B, is required, after stimulation by G-protein coupled receptors, for the synthesis of IP3 that will induce stable platelet adhesion. Recruited to the plasma membrane by the E-cadherin/beta-catenin complex where it provides the substrate PtdIns(4,5)P2 for the production of PtdIns(3,4,5)P3, IP3 and DAG, that will mobilize internal calcium and drive keratinocyte differentiation. Positively regulates insulin-induced translocation of SLC2A4 to the cell membrane in adipocytes. Together with PIP5K1C has a role during embryogenesis. Independently of its catalytic activity, is required for membrane ruffling formation, actin organization and focal adhesion formation during directional cell migration by controlling integrin-induced translocation of the small GTPase RAC1 to the plasma membrane. Also functions in the nucleus where it acts as an activator of TUT1 adenylyltransferase activity in nuclear speckles, thereby regulating mRNA polyadenylation of a select set of mRNAs. The protein is Phosphatidylinositol 4-phosphate 5-kinase type-1 alpha of Mus musculus (Mouse).